The sequence spans 131 residues: Mediator of RNA polymerase II transcription subunit 31 (131 aa).

A2 carries the N-acetylalanine modification.

The protein belongs to the Mediator complex subunit 31 family. As to quaternary structure, component of the Mediator complex, which is composed of MED1, MED4, MED6, MED7, MED8, MED9, MED10, MED11, MED12, MED13, MED13L, MED14, MED15, MED16, MED17, MED18, MED19, MED20, MED21, MED22, MED23, MED24, MED25, MED26, MED27, MED29, MED30, MED31, CCNC, CDK8 and CDC2L6/CDK11. The MED12, MED13, CCNC and CDK8 subunits form a distinct module termed the CDK8 module. Mediator containing the CDK8 module is less active than Mediator lacking this module in supporting transcriptional activation. Individual preparations of the Mediator complex lacking one or more distinct subunits have been variously termed ARC, CRSP, DRIP, PC2, SMCC and TRAP.

The protein localises to the nucleus. In terms of biological role, component of the Mediator complex, a coactivator involved in the regulated transcription of nearly all RNA polymerase II-dependent genes. Mediator functions as a bridge to convey information from gene-specific regulatory proteins to the basal RNA polymerase II transcription machinery. Mediator is recruited to promoters by direct interactions with regulatory proteins and serves as a scaffold for the assembly of a functional preinitiation complex with RNA polymerase II and the general transcription factors. The protein is Mediator of RNA polymerase II transcription subunit 31 (MED31) of Bos taurus (Bovine).